The chain runs to 389 residues: Large ribosomal subunit protein uL3 (389 aa).

It belongs to the universal ribosomal protein uL3 family.

The protein localises to the cytoplasm. This is Large ribosomal subunit protein uL3 (RPL3) from Debaryomyces hansenii (strain ATCC 36239 / CBS 767 / BCRC 21394 / JCM 1990 / NBRC 0083 / IGC 2968) (Yeast).